We begin with the raw amino-acid sequence, 829 residues long: High affinity cAMP-specific and IBMX-insensitive 3',5'-cyclic phosphodiesterase 8A (829 aa).

The disordered stretch occupies residues 16–46; the sequence is EDAPSPAAPPLSSGGPRLPQGQKTAALPRTR. Residue Ser20 is modified to Phosphoserine. The region spanning 213–283 is the PAS domain; that stretch reads ACNSVFTALE…DTINSCIRIG (71 aa). In terms of domain architecture, PAC spans 287–329; that stretch reads QGIYYAKKKNGDNIQQNVKIIPVIGQGGKIRHYVSIIRVCNGN. Residues 341 to 360 are disordered; the sequence is SDTHTDNQTGKHKDRRKGSL. Ser359 carries the phosphoserine; by PKA modification. Phosphoserine occurs at positions 386 and 457. The tract at residues 454 to 461 is involved in RAF1-binding; it reads RRLSGNEY. Tyr461 is modified (phosphotyrosine). The region spanning 480-820 is the PDEase domain; the sequence is SLDDVPPRIA…KYWKGLDEMK (341 aa). The Proton donor role is filled by His556. Residues His560, His596, Asp597, and Asp726 each coordinate a divalent metal cation.

This sequence belongs to the cyclic nucleotide phosphodiesterase family. PDE8 subfamily. In terms of assembly, interacts with RAF1. The interaction promotes RAF1 activity. A divalent metal cation serves as cofactor. Phosphorylated at Ser-359 by PKA under elevated cAMP conditions, this enhances catalytic activity. Expressed in most tissues except thymus and peripheral blood leukocytes. Highest levels in testis, ovary, small intestine and colon.

It carries out the reaction 3',5'-cyclic AMP + H2O = AMP + H(+). It functions in the pathway purine metabolism; 3',5'-cyclic AMP degradation; AMP from 3',5'-cyclic AMP: step 1/1. With respect to regulation, inhibited by dipyridimole. Insensitive to selective PDE inhibitors including rolipram and zaprinast as well as to the non-selective inhibitor, IBMX. Unaffected by cGMP. Its function is as follows. Hydrolyzes the second messenger cAMP, which is a key regulator of many important physiological processes. May be involved in maintaining basal levels of the cyclic nucleotide and/or in the cAMP regulation of germ cell development. Binding to RAF1 reduces RAF1 'Ser-259' inhibitory-phosphorylation and stimulates RAF1-dependent EGF-activated ERK-signaling. Protects against cell death induced by hydrogen peroxide and staurosporine. In Homo sapiens (Human), this protein is High affinity cAMP-specific and IBMX-insensitive 3',5'-cyclic phosphodiesterase 8A (PDE8A).